The following is a 328-amino-acid chain: Nucleotide-binding protein BL0705 (328 aa).

Residues 1–35 (MNQQTTNRDTGEAAATNAPANSATSTSTPDNQPTP) are disordered. Over residues 13–29 (AAATNAPANSATSTSTP) the composition is skewed to low complexity. 46–53 (GMSGAGRS) serves as a coordination point for ATP. 101–104 (DVRS) serves as a coordination point for GTP.

The protein belongs to the RapZ-like family.

Functionally, displays ATPase and GTPase activities. The chain is Nucleotide-binding protein BL0705 from Bifidobacterium longum (strain NCC 2705).